A 144-amino-acid chain; its full sequence is Nucleoside diphosphate kinase (144 aa).

ATP-binding residues include Lys-11, Phe-59, Arg-87, Thr-93, Arg-104, and Asn-114. Residue His-117 is the Pros-phosphohistidine intermediate of the active site.

Belongs to the NDK family. In terms of assembly, homotetramer. Mg(2+) serves as cofactor.

It localises to the cytoplasm. The enzyme catalyses a 2'-deoxyribonucleoside 5'-diphosphate + ATP = a 2'-deoxyribonucleoside 5'-triphosphate + ADP. It carries out the reaction a ribonucleoside 5'-diphosphate + ATP = a ribonucleoside 5'-triphosphate + ADP. Its function is as follows. Major role in the synthesis of nucleoside triphosphates other than ATP. The ATP gamma phosphate is transferred to the NDP beta phosphate via a ping-pong mechanism, using a phosphorylated active-site intermediate. In Sorangium cellulosum (strain So ce56) (Polyangium cellulosum (strain So ce56)), this protein is Nucleoside diphosphate kinase.